We begin with the raw amino-acid sequence, 176 residues long: Glutathione-regulated potassium-efflux system ancillary protein KefF (176 aa).

FMN contacts are provided by residues His-8, 14-17, 65-68, and 105-108; these read SHAN, MQWY, and TTGG.

Belongs to the NAD(P)H dehydrogenase (quinone) family. KefF subfamily. Homodimer. Interacts with KefC. FMN serves as cofactor.

It is found in the cell inner membrane. It carries out the reaction a quinone + NADH + H(+) = a quinol + NAD(+). The catalysed reaction is a quinone + NADPH + H(+) = a quinol + NADP(+). Regulatory subunit of a potassium efflux system that confers protection against electrophiles. Required for full activity of KefC. Shows redox enzymatic activity, but this enzymatic activity is not required for activation of KefC. The sequence is that of Glutathione-regulated potassium-efflux system ancillary protein KefF from Salmonella gallinarum (strain 287/91 / NCTC 13346).